We begin with the raw amino-acid sequence, 632 residues long: Threonine--tRNA ligase (632 aa).

Residues 1–59 (MIRITFLAKQKVEEYSSRVTGFDILQPDISKEAIALRVNGELYDLSREIESDTEIDVIQ) enclose the TGS domain. Residues 240 to 532 (DHRRIAKDMD…LIEHYAGKFP (293 aa)) form a catalytic region. The Zn(2+) site is built by Cys332, His383, and His509.

This sequence belongs to the class-II aminoacyl-tRNA synthetase family. As to quaternary structure, homodimer. Requires Zn(2+) as cofactor.

It localises to the cytoplasm. The catalysed reaction is tRNA(Thr) + L-threonine + ATP = L-threonyl-tRNA(Thr) + AMP + diphosphate + H(+). In terms of biological role, catalyzes the attachment of threonine to tRNA(Thr) in a two-step reaction: L-threonine is first activated by ATP to form Thr-AMP and then transferred to the acceptor end of tRNA(Thr). Also edits incorrectly charged L-seryl-tRNA(Thr). The protein is Threonine--tRNA ligase of Wolbachia sp. subsp. Brugia malayi (strain TRS).